Here is a 179-residue protein sequence, read N- to C-terminus: NADH-quinone oxidoreductase subunit B (179 aa).

Residues C35, C36, C100, and C129 each contribute to the [4Fe-4S] cluster site.

It belongs to the complex I 20 kDa subunit family. As to quaternary structure, NDH-1 is composed of 14 different subunits. Subunits NuoB, C, D, E, F, and G constitute the peripheral sector of the complex. The cofactor is [4Fe-4S] cluster.

Its subcellular location is the cell inner membrane. It carries out the reaction a quinone + NADH + 5 H(+)(in) = a quinol + NAD(+) + 4 H(+)(out). NDH-1 shuttles electrons from NADH, via FMN and iron-sulfur (Fe-S) centers, to quinones in the respiratory chain. Couples the redox reaction to proton translocation (for every two electrons transferred, four hydrogen ions are translocated across the cytoplasmic membrane), and thus conserves the redox energy in a proton gradient. This chain is NADH-quinone oxidoreductase subunit B, found in Aquifex aeolicus (strain VF5).